The chain runs to 363 residues: NAD kinase 1 (363 aa).

Asp68 (proton acceptor) is an active-site residue. Residues 68–69, Arg73, 175–176, Arg186, Asp205, Ala240, and Gln275 contribute to the NAD(+) site; these read DG and ND.

Belongs to the NAD kinase family. The cofactor is a divalent metal cation.

The protein localises to the cytoplasm. The enzyme catalyses NAD(+) + ATP = ADP + NADP(+) + H(+). Involved in the regulation of the intracellular balance of NAD and NADP, and is a key enzyme in the biosynthesis of NADP. Catalyzes specifically the phosphorylation on 2'-hydroxyl of the adenosine moiety of NAD to yield NADP. The protein is NAD kinase 1 of Streptomyces coelicolor (strain ATCC BAA-471 / A3(2) / M145).